We begin with the raw amino-acid sequence, 940 residues long: Isoleucine--tRNA ligase (940 aa).

The short motif at 58 to 68 (PYANGSIHIGH) is the 'HIGH' region element. E564 contacts L-isoleucyl-5'-AMP. A 'KMSKS' region motif is present at residues 605–609 (KMSKS). K608 contacts ATP. Residues C903, C906, C923, and C926 each contribute to the Zn(2+) site.

The protein belongs to the class-I aminoacyl-tRNA synthetase family. IleS type 1 subfamily. Monomer. Zn(2+) serves as cofactor.

The protein resides in the cytoplasm. The catalysed reaction is tRNA(Ile) + L-isoleucine + ATP = L-isoleucyl-tRNA(Ile) + AMP + diphosphate. Catalyzes the attachment of isoleucine to tRNA(Ile). As IleRS can inadvertently accommodate and process structurally similar amino acids such as valine, to avoid such errors it has two additional distinct tRNA(Ile)-dependent editing activities. One activity is designated as 'pretransfer' editing and involves the hydrolysis of activated Val-AMP. The other activity is designated 'posttransfer' editing and involves deacylation of mischarged Val-tRNA(Ile). This is Isoleucine--tRNA ligase from Shewanella putrefaciens (strain CN-32 / ATCC BAA-453).